A 293-amino-acid chain; its full sequence is Small ribosomal subunit protein uS2 (293 aa).

The disordered stretch occupies residues 265–293 (DGGDWAASSAPAPGGENWAEAQPAEGAKW).

The protein belongs to the universal ribosomal protein uS2 family. In terms of assembly, component of the small ribosomal subunit. Mature ribosomes consist of a small (40S) and a large (60S) subunit. The 40S subunit contains about 33 different proteins and 1 molecule of RNA (18S). The 60S subunit contains about 49 different proteins and 3 molecules of RNA (25S, 5.8S and 5S). Interacts with rps21.

Its subcellular location is the cytoplasm. Required for the assembly and/or stability of the 40S ribosomal subunit. Required for the processing of the 20S rRNA-precursor to mature 18S rRNA in a late step of the maturation of 40S ribosomal subunits. The chain is Small ribosomal subunit protein uS2 (rps0) from Emericella nidulans (strain FGSC A4 / ATCC 38163 / CBS 112.46 / NRRL 194 / M139) (Aspergillus nidulans).